The following is a 513-amino-acid chain: MAAEVDSRPRGLPGGGASLGAAREHVQAVTRNYITHPRITYRTVCSVNGPLVVLDQVKFAQYAEIVNFTLPNGTQRSGQVLEVSGTKAIVQVFEGTSGIDAQKTTCEFTGDILRTPVSEDMLGRVFNGSGKPIDKGPVVMAEDFLDINGQPINPHDRIYPEEMIETGISPIDVMNSIARGQKIPIFSAAGLPHNEIAAQICRQAGLVKKSKAVLDYHDDNFAIVFAAMGVNMETARFFKSDFEQNGTMGNVCLFLNLANDPTIERIITPRLALTTAEFLAYQCEKHVLVILTDMSSYAEALREVSAAREEVPGRRGFPGYMYTDLATIYERAGRVEGRGGSITQIPILTMPNDDITHPIPDLTGFITEGQIYVDRQLHNRQIYPPINVLPSLSRLMKSAIGEGMTRKDHGDVSNQLYACYAIGKDVQAMKAVVGEEALTSEDLLYLEFLQKFEKKFINQGPYEKRSVFESLDLGWKLLRTFPKEMLKRIPQNIIDEFFSREGAPQDTEADTAL.

Arg-394 is an ATP binding site. The PDZ-binding motif lies at Asp-510 to Leu-513.

Belongs to the ATPase alpha/beta chains family. In terms of assembly, V-ATPase is a heteromultimeric enzyme made up of two complexes: the ATP-hydrolytic V1 complex and the proton translocation V0 complex. The V1 complex consists of three catalytic AB heterodimers that form a heterohexamer, three peripheral stalks each consisting of EG heterodimers, one central rotor including subunits D and F, and the regulatory subunits C and H. The proton translocation complex V0 consists of the proton transport subunit a, a ring of proteolipid subunits c9c'', rotary subunit d, subunits e and f, and the accessory subunits ATP6AP1/Ac45 and ATP6AP2/PRR. Forms a complex with NHERF1 and SCL4A7. Kidney cortex and medulla.

It localises to the apical cell membrane. It is found in the basolateral cell membrane. Functionally, non-catalytic subunit of the V1 complex of vacuolar(H+)-ATPase (V-ATPase), a multisubunit enzyme composed of a peripheral complex (V1) that hydrolyzes ATP and a membrane integral complex (V0) that translocates protons. V-ATPase is responsible for acidifying and maintaining the pH of intracellular compartments and in some cell types, is targeted to the plasma membrane, where it is responsible for acidifying the extracellular environment. Essential for the proper assembly and activity of V-ATPase. In renal intercalated cells, mediates secretion of protons (H+) into the urine thereby ensuring correct urinary acidification. Required for optimal olfactory function by mediating the acidification of the nasal olfactory epithelium. The polypeptide is V-type proton ATPase subunit B, kidney isoform (ATP6V1B1) (Bos taurus (Bovine)).